A 45-amino-acid chain; its full sequence is Small polypeptide DEVIL 2 (45 aa).

The interval 14–45 (SQSRRLGKYLKEQKGRIYIIRRCVMMLLCSHD) is required for DVL/RTFL small polypeptide activity. Residues 17 to 33 (RRLGKYLKEQKGRIYII) form a helical membrane-spanning segment.

Belongs to the DVL/RTFL small polypeptides family. As to expression, mostly expressed in stems and, to a lower extent, in roots and leaves.

The protein localises to the cell membrane. In terms of biological role, small polypeptide acting as a regulatory molecule which coordinates cellular responses required for differentiation, growth and development, including leaves shape, pedicule elongation, inflorescence organization and fruit maturation, probably by restricting polar cell proliferation in lateral organs and coordinating socket cell recruitment and differentiation at trichome sites. The chain is Small polypeptide DEVIL 2 from Arabidopsis thaliana (Mouse-ear cress).